Consider the following 398-residue polypeptide: MKQLTILGSTGSIGNSTLSVVRANPELFKVTALVAGRNVREMAQQCLEFSPRYAAMSDEHSAKSLRLLLAEQGSDTEVYSGETAACELAALDDVDQVMAAIVGIAGLPSTLAAIRAGKQVLLANKESLITCGKLFMDEVKRSRAQLLPIDSEHNAIFQSLPERIQRQLGYSSLNENGVSRIILTGSGGPFRETPLSQFSDVTPDQACAHPNWSMGRKISVDSATMMNKGLEYVEARWLFNASAEQIEVVLHPQSVIHSMVRYHDGSILAQMGTPDMRTPIAHAMAYPMRVSSGVAPLDFCKVGALTFTTPDYQRYPCLKLAIDACNAGQAATTALNAANEISVMAFLDSKIRFTDIEVINRTVVEGLLLSEPTSVEEVLVIDRKARDVAAQVIAKLNN.

Thr-10, Gly-11, Ser-12, Ile-13, Gly-36, Arg-37, Asn-38, and Asn-124 together coordinate NADPH. Lys-125 serves as a coordination point for 1-deoxy-D-xylulose 5-phosphate. Residue Glu-126 participates in NADPH binding. Asp-150 serves as a coordination point for Mn(2+). 1-deoxy-D-xylulose 5-phosphate-binding residues include Ser-151, Glu-152, Ser-186, and His-209. Position 152 (Glu-152) interacts with Mn(2+). NADPH is bound at residue Gly-215. Residues Ser-222, Asn-227, Lys-228, and Glu-231 each contribute to the 1-deoxy-D-xylulose 5-phosphate site. Glu-231 contributes to the Mn(2+) binding site.

The protein belongs to the DXR family. As to quaternary structure, homodimer. Mg(2+) is required as a cofactor. It depends on Mn(2+) as a cofactor.

It carries out the reaction 2-C-methyl-D-erythritol 4-phosphate + NADP(+) = 1-deoxy-D-xylulose 5-phosphate + NADPH + H(+). The protein operates within isoprenoid biosynthesis; isopentenyl diphosphate biosynthesis via DXP pathway; isopentenyl diphosphate from 1-deoxy-D-xylulose 5-phosphate: step 1/6. Functionally, catalyzes the NADPH-dependent rearrangement and reduction of 1-deoxy-D-xylulose-5-phosphate (DXP) to 2-C-methyl-D-erythritol 4-phosphate (MEP). This chain is 1-deoxy-D-xylulose 5-phosphate reductoisomerase, found in Yersinia pseudotuberculosis serotype IB (strain PB1/+).